A 468-amino-acid chain; its full sequence is Spliceosome-associated protein CWC27 homolog (468 aa).

Ser2 carries the post-translational modification N-acetylserine. The 156-residue stretch at 11 to 166 (TNGKVLLKTT…NPHRIKSCEV (156 aa)) folds into the PPIase cyclophilin-type domain. Disordered regions lie at residues 204–382 (LLSF…EDQT) and 427–468 (RKVK…KERR). The stretch at 206–229 (SFGEEAEEEEEEVNRVSQSMKGRS) forms a coiled coil. Residues 231-241 (SSHDLLKDDPH) show a composition bias toward basic and acidic residues. The span at 256–268 (TGDLEDDAEDDSV) shows a compositional bias: acidic residues. 2 stretches are compositionally biased toward basic and acidic residues: residues 269-287 (EHDG…ERIA) and 302-342 (GDGE…AEKG). Residue Ser273 is modified to Phosphoserine. Positions 309–342 (ASRSEELRKEARQLKRELLAAKQKKESATKAEKG) form a coiled coil. Residue Ser343 is modified to Phosphoserine. Basic and acidic residues-rich tracts occupy residues 356–368 (EYRR…EALR) and 453–468 (RREE…KERR).

It belongs to the cyclophilin-type PPIase family. As to quaternary structure, part of the activated spliceosome B/catalytic step 1 spliceosome, one of the forms of the spliceosome which has a well-formed active site but still cannot catalyze the branching reaction and is composed at least of 52 proteins, the U2, U5 and U6 snRNAs and the pre-mRNA. Recruited during early steps of activated spliceosome B maturation, it is probably one of the first proteins released from this complex as he matures to the spliceosome C complex. Component of the minor spliceosome, which splices U12-type introns.

It localises to the nucleus. As part of the spliceosome, plays a role in pre-mRNA splicing. Probable inactive PPIase with no peptidyl-prolyl cis-trans isomerase activity. As a component of the minor spliceosome, involved in the splicing of U12-type introns in pre-mRNAs. This Rattus norvegicus (Rat) protein is Spliceosome-associated protein CWC27 homolog.